Reading from the N-terminus, the 253-residue chain is Triosephosphate isomerase (253 aa).

9-11 contacts substrate; that stretch reads NWK. Residue His95 is the Electrophile of the active site. Glu167 (proton acceptor) is an active-site residue. Substrate contacts are provided by residues Gly173, Ser213, and 234 to 235; that span reads GG. Ser213 carries the post-translational modification Phosphoserine.

This sequence belongs to the triosephosphate isomerase family. In terms of assembly, homodimer.

The protein resides in the cytoplasm. It catalyses the reaction D-glyceraldehyde 3-phosphate = dihydroxyacetone phosphate. The protein operates within carbohydrate biosynthesis; gluconeogenesis. Its pathway is carbohydrate degradation; glycolysis; D-glyceraldehyde 3-phosphate from glycerone phosphate: step 1/1. Functionally, involved in the gluconeogenesis. Catalyzes stereospecifically the conversion of dihydroxyacetone phosphate (DHAP) to D-glyceraldehyde-3-phosphate (G3P). The polypeptide is Triosephosphate isomerase (Bacillus subtilis (strain 168)).